The primary structure comprises 161 residues: Endoribonuclease YbeY (161 aa).

Zn(2+) is bound by residues H121, H125, and H131.

It belongs to the endoribonuclease YbeY family. The cofactor is Zn(2+).

Its subcellular location is the cytoplasm. Its function is as follows. Single strand-specific metallo-endoribonuclease involved in late-stage 70S ribosome quality control and in maturation of the 3' terminus of the 16S rRNA. The sequence is that of Endoribonuclease YbeY from Xylella fastidiosa (strain M23).